Here is a 65-residue protein sequence, read N- to C-terminus: uncharacterized protein (65 aa).

The protein to E.coli YjiX.

This is an uncharacterized protein from Escherichia coli O6:H1 (strain CFT073 / ATCC 700928 / UPEC).